A 213-amino-acid polypeptide reads, in one-letter code: ATP phosphoribosyltransferase (213 aa).

This sequence belongs to the ATP phosphoribosyltransferase family. Short subfamily. Heteromultimer composed of HisG and HisZ subunits.

It is found in the cytoplasm. It catalyses the reaction 1-(5-phospho-beta-D-ribosyl)-ATP + diphosphate = 5-phospho-alpha-D-ribose 1-diphosphate + ATP. It participates in amino-acid biosynthesis; L-histidine biosynthesis; L-histidine from 5-phospho-alpha-D-ribose 1-diphosphate: step 1/9. Catalyzes the condensation of ATP and 5-phosphoribose 1-diphosphate to form N'-(5'-phosphoribosyl)-ATP (PR-ATP). Has a crucial role in the pathway because the rate of histidine biosynthesis seems to be controlled primarily by regulation of HisG enzymatic activity. The chain is ATP phosphoribosyltransferase (hisG) from Listeria monocytogenes serovar 1/2a (strain ATCC BAA-679 / EGD-e).